A 452-amino-acid polypeptide reads, in one-letter code: Probable glycine dehydrogenase (decarboxylating) subunit 1 (452 aa).

This sequence belongs to the GcvP family. N-terminal subunit subfamily. As to quaternary structure, the glycine cleavage system is composed of four proteins: P, T, L and H. In this organism, the P 'protein' is a heterodimer of two subunits.

The catalysed reaction is N(6)-[(R)-lipoyl]-L-lysyl-[glycine-cleavage complex H protein] + glycine + H(+) = N(6)-[(R)-S(8)-aminomethyldihydrolipoyl]-L-lysyl-[glycine-cleavage complex H protein] + CO2. The glycine cleavage system catalyzes the degradation of glycine. The P protein binds the alpha-amino group of glycine through its pyridoxal phosphate cofactor; CO(2) is released and the remaining methylamine moiety is then transferred to the lipoamide cofactor of the H protein. The sequence is that of Probable glycine dehydrogenase (decarboxylating) subunit 1 from Nitrosospira multiformis (strain ATCC 25196 / NCIMB 11849 / C 71).